A 188-amino-acid polypeptide reads, in one-letter code: dCTP deaminase (188 aa).

Residues 111-116 (KSTYAR), 135-137 (TLE), glutamine 156, tyrosine 170, and glutamine 180 contribute to the dCTP site. Catalysis depends on glutamate 137, which acts as the Proton donor/acceptor.

This sequence belongs to the dCTP deaminase family. Homotrimer.

The catalysed reaction is dCTP + H2O + H(+) = dUTP + NH4(+). Its pathway is pyrimidine metabolism; dUMP biosynthesis; dUMP from dCTP (dUTP route): step 1/2. In terms of biological role, catalyzes the deamination of dCTP to dUTP. This chain is dCTP deaminase, found in Cupriavidus taiwanensis (strain DSM 17343 / BCRC 17206 / CCUG 44338 / CIP 107171 / LMG 19424 / R1) (Ralstonia taiwanensis (strain LMG 19424)).